Reading from the N-terminus, the 319-residue chain is Malate dehydrogenase (319 aa).

NAD(+) contacts are provided by residues 10–15 (GAGNIG) and Asp34. Residues Arg83 and Arg89 each coordinate substrate. Residues Asn96 and 119 to 121 (ITN) each bind NAD(+). Substrate contacts are provided by Asn121 and Arg152. Catalysis depends on His176, which acts as the Proton acceptor.

This sequence belongs to the LDH/MDH superfamily. MDH type 3 family.

It carries out the reaction (S)-malate + NAD(+) = oxaloacetate + NADH + H(+). Functionally, catalyzes the reversible oxidation of malate to oxaloacetate. This chain is Malate dehydrogenase, found in Francisella philomiragia subsp. philomiragia (strain ATCC 25017 / CCUG 19701 / FSC 153 / O#319-036).